Here is a 268-residue protein sequence, read N- to C-terminus: uncharacterized protein (268 aa).

Residues 15–77 enclose the HTH iclR-type domain; that stretch reads NQALIRGLRL…NAAGSYRLTI (63 aa). The H-T-H motif DNA-binding region spans 37 to 56; it reads LAKLAELANLNKSTAHRLLQ. The 174-residue stretch at 92–265 folds into the IclR-ED domain; that stretch reads IIHVASPYLE…AEQISLELGY (174 aa).

This is an uncharacterized protein from Haemophilus influenzae (strain ATCC 51907 / DSM 11121 / KW20 / Rd).